The sequence spans 290 residues: Nucleotide-binding protein Bpet0443 (290 aa).

Residue 9-16 (GISGSGKS) participates in ATP binding. Residue 58–61 (DVRS) participates in GTP binding.

This sequence belongs to the RapZ-like family.

Functionally, displays ATPase and GTPase activities. This is Nucleotide-binding protein Bpet0443 from Bordetella petrii (strain ATCC BAA-461 / DSM 12804 / CCUG 43448).